The primary structure comprises 267 residues: 4-hydroxy-tetrahydrodipicolinate reductase (267 aa).

NAD(+) is bound at residue 8 to 13 (GASGRM). R35 serves as a coordination point for NADP(+). NAD(+) is bound by residues 98-100 (GTT) and 122-125 (APNM). H155 functions as the Proton donor/acceptor in the catalytic mechanism. (S)-2,3,4,5-tetrahydrodipicolinate is bound at residue H156. K159 acts as the Proton donor in catalysis. 165–166 (GT) contacts (S)-2,3,4,5-tetrahydrodipicolinate.

The protein belongs to the DapB family.

The protein localises to the cytoplasm. It catalyses the reaction (S)-2,3,4,5-tetrahydrodipicolinate + NAD(+) + H2O = (2S,4S)-4-hydroxy-2,3,4,5-tetrahydrodipicolinate + NADH + H(+). The enzyme catalyses (S)-2,3,4,5-tetrahydrodipicolinate + NADP(+) + H2O = (2S,4S)-4-hydroxy-2,3,4,5-tetrahydrodipicolinate + NADPH + H(+). The protein operates within amino-acid biosynthesis; L-lysine biosynthesis via DAP pathway; (S)-tetrahydrodipicolinate from L-aspartate: step 4/4. In terms of biological role, catalyzes the conversion of 4-hydroxy-tetrahydrodipicolinate (HTPA) to tetrahydrodipicolinate. The chain is 4-hydroxy-tetrahydrodipicolinate reductase from Hahella chejuensis (strain KCTC 2396).